We begin with the raw amino-acid sequence, 262 residues long: Acyl-coenzyme A diphosphatase FITM2 (262 aa).

The Cytoplasmic portion of the chain corresponds to 1–23 (MEHLERCAWVLRGTLVRSAVRKY). A helical transmembrane segment spans residues 24 to 44 (LPWALAASMLAGSLLKELSPL). Residues 45 to 57 (PESYLSNKRNVLN) are Lumenal-facing. Residues 58–78 (VYFVKVAWAWTFCLLLPFIAL) form a helical membrane-spanning segment. Residues 79–93 (TNYHLTGKAGLVLRR) are Cytoplasmic-facing. A helical transmembrane segment spans residues 94 to 114 (LSTLLVGTAIWYVCTAIFSNI). At 115 to 145 (EHYTGSCYQSPALEGERKEHQSKQQCHGEGG) the chain is on the lumenal side. A helical transmembrane segment spans residues 146–166 (FWHGFDISGHSFLLTFCALMI). Residue His155 is part of the active site. The Cytoplasmic segment spans residues 167 to 190 (VEEMAVLHEVKTDRNHCLHAAITT). The chain crosses the membrane as a helical span at residues 191–211 (LVVALGFLTFIWVWMFLCTAV). Topologically, residues 212-218 (YFHNLSQ) are lumenal. His214 is a catalytic residue. A helical transmembrane segment spans residues 219-239 (KVFGTLFGLLGWYGTYGCWYL). Topologically, residues 240–262 (KSFSPGLPPQSSSLNLKQDTYKK) are cytoplasmic.

Belongs to the FIT family. FIT2 subfamily.

It is found in the endoplasmic reticulum membrane. It carries out the reaction an acyl-CoA + H2O = an acyl-4'-phosphopantetheine + adenosine 3',5'-bisphosphate + 2 H(+). The enzyme catalyses (9Z)-octadecenoyl-CoA + H2O = S-(9Z-octadecenoyl)-4'-phosphopantetheine + adenosine 3',5'-bisphosphate + 2 H(+). It catalyses the reaction (5Z,8Z,11Z,14Z)-eicosatetraenoyl-CoA + H2O = S-(5Z,8Z,11Z,14Z-eicosatetraenoyl)-4'-phosphopantetheine + adenosine 3',5'-bisphosphate + 2 H(+). The catalysed reaction is hexadecanoyl-CoA + H2O = S-hexadecanoyl-4'-phosphopantetheine + adenosine 3',5'-bisphosphate + 2 H(+). Fatty acyl-coenzyme A (CoA) diphosphatase that hydrolyzes fatty acyl-CoA to yield acyl-4'-phosphopantetheine and adenosine 3',5'-bisphosphate. Preferentially hydrolyzes unsaturated long-chain acyl-CoA substrates such as oleoyl-CoA/(9Z)-octadecenoyl-CoA and arachidonoyl-CoA/(5Z,8Z,11Z,14Z)-eicosatetraenoyl-CoA in the endoplasmic reticulum (ER) lumen. This catalytic activity is required for maintaining ER structure and for lipid droplets (LDs) biogenesis, which are lipid storage organelles involved in maintaining lipid and energy homeostasis. Directly binds to diacylglycerol (DAGs) and triacylglycerol, which is also important for LD biogenesis. May support directional budding of nacent LDs from the ER into the cytosol by reducing DAG levels at sites of LD formation. Plays a role in the regulation of cell morphology and cytoskeletal organization. The polypeptide is Acyl-coenzyme A diphosphatase FITM2 (Bos taurus (Bovine)).